The following is a 247-amino-acid chain: Large ribosomal subunit protein uL30 (247 aa).

M1 carries the post-translational modification N-acetylmethionine. 4 repeat units span residues 7–17, 18–29, 30–41, and 42–53. The interval 7–53 is 4 X 12 AA tandem repeats; sequence KKKVPAVPETLKKKRRNFAELKIKRLRKKFAQKMLRKARRKLIYEKA. At T16 the chain carries Phosphothreonine. K123 carries the post-translational modification N6-acetyllysine. Position 126 is an N6-succinyllysine (K126). Y138 is modified (phosphotyrosine).

Belongs to the universal ribosomal protein uL30 family. As to quaternary structure, component of the large ribosomal subunit. Homodimer. Interacts with DHX33.

It localises to the cytoplasm. Its function is as follows. Component of the large ribosomal subunit. The ribosome is a large ribonucleoprotein complex responsible for the synthesis of proteins in the cell. Binds to G-rich structures in 28S rRNA and in mRNAs. Plays a regulatory role in the translation apparatus; inhibits cell-free translation of mRNAs. In Pongo abelii (Sumatran orangutan), this protein is Large ribosomal subunit protein uL30 (RPL7).